A 352-amino-acid chain; its full sequence is Nicotinate-nucleotide--dimethylbenzimidazole phosphoribosyltransferase (352 aa).

E318 functions as the Proton acceptor in the catalytic mechanism.

The protein belongs to the CobT family.

The enzyme catalyses 5,6-dimethylbenzimidazole + nicotinate beta-D-ribonucleotide = alpha-ribazole 5'-phosphate + nicotinate + H(+). Its pathway is nucleoside biosynthesis; alpha-ribazole biosynthesis; alpha-ribazole from 5,6-dimethylbenzimidazole: step 1/2. Functionally, catalyzes the synthesis of alpha-ribazole-5'-phosphate from nicotinate mononucleotide (NAMN) and 5,6-dimethylbenzimidazole (DMB). This is Nicotinate-nucleotide--dimethylbenzimidazole phosphoribosyltransferase from Azotobacter vinelandii (strain DJ / ATCC BAA-1303).